Consider the following 339-residue polypeptide: NADPH dehydrogenase (339 aa).

24-27 serves as a coordination point for FMN; sequence SPMC. Y29 provides a ligand contact to substrate. Residues A61 and Q103 each coordinate FMN. Position 165 to 168 (165 to 168) interacts with substrate; it reads HGAH. FMN-binding positions include R216 and 308–309; that span reads AR.

The protein belongs to the NADH:flavin oxidoreductase/NADH oxidase family. NamA subfamily. Homotetramer. FMN is required as a cofactor.

The enzyme catalyses A + NADPH + H(+) = AH2 + NADP(+). Functionally, catalyzes the reduction of the double bond of an array of alpha,beta-unsaturated aldehydes and ketones. It also reduces the nitro group of nitroester and nitroaromatic compounds. It could have a role in detoxification processes. This chain is NADPH dehydrogenase, found in Bacillus licheniformis (strain ATCC 14580 / DSM 13 / JCM 2505 / CCUG 7422 / NBRC 12200 / NCIMB 9375 / NCTC 10341 / NRRL NRS-1264 / Gibson 46).